Consider the following 275-residue polypeptide: Large ribosomal subunit protein uL2 (275 aa).

Residues 223 to 275 (VAMNPVDHPHGGGEGRTSGGRHPVSPWGQPTKGYKTRSNKRTDKYIVRRRNKK) are disordered.

The protein belongs to the universal ribosomal protein uL2 family. In terms of assembly, part of the 50S ribosomal subunit. Forms a bridge to the 30S subunit in the 70S ribosome.

Its function is as follows. One of the primary rRNA binding proteins. Required for association of the 30S and 50S subunits to form the 70S ribosome, for tRNA binding and peptide bond formation. It has been suggested to have peptidyltransferase activity; this is somewhat controversial. Makes several contacts with the 16S rRNA in the 70S ribosome. In Shewanella pealeana (strain ATCC 700345 / ANG-SQ1), this protein is Large ribosomal subunit protein uL2.